Reading from the N-terminus, the 130-residue chain is Fumarate reductase subunit C (130 aa).

3 consecutive transmembrane segments (helical) span residues 30–50 (EGTS…VFAL), 60–80 (FVSF…LFAA), and 110–130 (IKAL…VALL).

This sequence belongs to the FrdC family. Part of an enzyme complex containing four subunits: a flavoprotein (FrdA), an iron-sulfur protein (FrdB), and two hydrophobic anchor proteins (FrdC and FrdD).

Its subcellular location is the cell inner membrane. Functionally, two distinct, membrane-bound, FAD-containing enzymes are responsible for the catalysis of fumarate and succinate interconversion; fumarate reductase is used in anaerobic growth, and succinate dehydrogenase is used in aerobic growth. Anchors the catalytic components of the fumarate reductase complex to the cell inner membrane, binds quinones. The sequence is that of Fumarate reductase subunit C from Yersinia pseudotuberculosis serotype O:1b (strain IP 31758).